Consider the following 266-residue polypeptide: Glucosamine-6-phosphate deaminase (266 aa).

Aspartate 72 (proton acceptor; for enolization step) is an active-site residue. Aspartate 141 acts as the For ring-opening step in catalysis. Histidine 143 (proton acceptor; for ring-opening step) is an active-site residue. Glutamate 148 (for ring-opening step) is an active-site residue.

It belongs to the glucosamine/galactosamine-6-phosphate isomerase family. NagB subfamily. Homohexamer; trimer of disulfide-linked dimers.

The enzyme catalyses alpha-D-glucosamine 6-phosphate + H2O = beta-D-fructose 6-phosphate + NH4(+). It functions in the pathway amino-sugar metabolism; N-acetylneuraminate degradation; D-fructose 6-phosphate from N-acetylneuraminate: step 5/5. With respect to regulation, allosterically activated by N-acetylglucosamine 6-phosphate (GlcNAc6P). In terms of biological role, catalyzes the reversible isomerization-deamination of glucosamine 6-phosphate (GlcN6P) to form fructose 6-phosphate (Fru6P) and ammonium ion. The polypeptide is Glucosamine-6-phosphate deaminase (Escherichia coli O6:H1 (strain CFT073 / ATCC 700928 / UPEC)).